The sequence spans 363 residues: Flagellar P-ring protein (363 aa).

The N-terminal stretch at 1 to 20 (MKYKLVLAVAVLVFSLPSQA) is a signal peptide.

It belongs to the FlgI family. As to quaternary structure, the basal body constitutes a major portion of the flagellar organelle and consists of four rings (L,P,S, and M) mounted on a central rod.

It is found in the periplasm. The protein localises to the bacterial flagellum basal body. Its function is as follows. Assembles around the rod to form the L-ring and probably protects the motor/basal body from shearing forces during rotation. In Shewanella baltica (strain OS223), this protein is Flagellar P-ring protein.